The sequence spans 212 residues: Hemagglutinin 2 (212 aa).

The protein resides in the secreted. In terms of biological role, induces agglutination of neuraminidase-treated erythrocytes. In Eikenella corrodens, this protein is Hemagglutinin 2 (hag2).